We begin with the raw amino-acid sequence, 399 residues long: Phosphoglycerate kinase (399 aa).

Residues 22–24, Arg37, 60–63, Arg119, and Arg152 each bind substrate; these read DLN and HFGR. ATP contacts are provided by residues Lys202, Glu324, and 354–357; that span reads GGDT.

It belongs to the phosphoglycerate kinase family. In terms of assembly, monomer.

Its subcellular location is the cytoplasm. The enzyme catalyses (2R)-3-phosphoglycerate + ATP = (2R)-3-phospho-glyceroyl phosphate + ADP. It functions in the pathway carbohydrate degradation; glycolysis; pyruvate from D-glyceraldehyde 3-phosphate: step 2/5. The protein is Phosphoglycerate kinase of Sinorhizobium fredii (strain NBRC 101917 / NGR234).